Here is a 134-residue protein sequence, read N- to C-terminus: Small ribosomal subunit protein bS6 (134 aa).

Basic and acidic residues predominate over residues 113 to 122 (NKDIKEKEQP). A disordered region spans residues 113-134 (NKDIKEKEQPSESNVDADLKVN).

Belongs to the bacterial ribosomal protein bS6 family.

Functionally, binds together with bS18 to 16S ribosomal RNA. The polypeptide is Small ribosomal subunit protein bS6 (Borrelia recurrentis (strain A1)).